The chain runs to 89 residues: MALTQQRKQEIINNYQVHGTDTGSTDVQIAMLTERINRLSEHLQANKKDHSSRRGLLKLIGHRKRLLAYLQQESREKYQALISRLGIRG.

The protein belongs to the universal ribosomal protein uS15 family. As to quaternary structure, part of the 30S ribosomal subunit. Forms a bridge to the 50S subunit in the 70S ribosome, contacting the 23S rRNA.

In terms of biological role, one of the primary rRNA binding proteins, it binds directly to 16S rRNA where it helps nucleate assembly of the platform of the 30S subunit by binding and bridging several RNA helices of the 16S rRNA. Its function is as follows. Forms an intersubunit bridge (bridge B4) with the 23S rRNA of the 50S subunit in the ribosome. This chain is Small ribosomal subunit protein uS15, found in Trichormus variabilis (strain ATCC 29413 / PCC 7937) (Anabaena variabilis).